The primary structure comprises 715 residues: Tensin-4 (715 aa).

A signal peptide spans 1–18 (MSQVMSSPLLAGGHAVSL). Position 82 is a phosphoserine (Ser-82). 4 disordered regions span residues 159-183 (RCHD…RSGG), 195-251 (RSSS…SPLV), 291-364 (SLLH…CPPS), and 376-435 (LING…ARDM). Polar residues predominate over residues 197–206 (SSESLIFSGN). Residue Ser-248 is modified to Phosphoserine. The span at 291-325 (SLLHSSNSSHQSSSRSLESPANSSSSLHSLGSVSL) shows a compositional bias: low complexity. Residues 449–556 (WFKPNITREQ…ALPCKLTIPQ (108 aa)) form the SH2 domain. In terms of domain architecture, PTB spans 582–705 (CHTLYLSSVS…QPASQVIGLV (124 aa)).

The protein belongs to the PTEN phosphatase protein family. Interacts (via SH2 domain) with Rho GTPase-activating protein DLC1 (via C-terminus); the interaction is independent of DLC1 tyrosine phosphorylation. Interacts with integrin ITGB1; the interaction displaces tensin TNS3 from the ITGB1 cytoplasmic tail and promotes ITGB1 stability. Interacts (via SH2 domain) with E3 ubiquitin-protein ligase CBL (phosphorylated on 'Tyr-774'); the interaction is enhanced in the presence of EGF and reduces interaction of CBL with EGFR. Interacts (via SH2 domain) with receptor tyrosine kinase MET (when phosphorylated); the interaction increases MET protein stability. Post-translationally, proteolytically cleaved by caspase-3 during apoptosis. As to expression, expressed at low levels in colon (at protein level). Expressed in prostate and placenta.

The protein resides in the cell junction. It localises to the focal adhesion. It is found in the cytoplasm. Its subcellular location is the cytoskeleton. In terms of biological role, promotes EGF-induced cell migration by displacing tensin TNS3 from the cytoplasmic tail of integrin ITGB1 which results in dissociation of TNS3 from focal adhesions, disassembly of actin stress fibers and initiation of cell migration. Suppresses ligand-induced degradation of EGFR by reducing EGFR ubiquitination in the presence of EGF. Increases MET protein stability by inhibiting MET endocytosis and subsequent lysosomal degradation which leads to increased cell survival, proliferation and migration. The polypeptide is Tensin-4 (TNS4) (Homo sapiens (Human)).